A 205-amino-acid chain; its full sequence is Venom allergen 5 (205 aa).

4 disulfides stabilise this stretch: cysteine 4/cysteine 16, cysteine 8/cysteine 104, cysteine 28/cysteine 96, and cysteine 171/cysteine 188. The SCP domain occupies 47–190 (VNEHNRFRQK…MQHHYLICNY (144 aa)).

Belongs to the CRISP family. Venom allergen 5-like subfamily. As to expression, expressed by the venom gland.

The protein localises to the secreted. In Polistes fuscatus (Paper wasp), this protein is Venom allergen 5.